The following is a 294-amino-acid chain: S-adenosylmethionine uptake transporter (294 aa).

The next 10 membrane-spanning stretches (helical) occupy residues 4-24 (ALKT…TSSI), 41-61 (VAFF…VYYG), 74-91 (VLRG…TYGL), 98-118 (TATV…VFIL), 121-141 (NIIW…VVML), 148-168 (FNPE…LDII), 178-198 (MLSM…PVAM), 207-227 (FELA…FFLL), 237-257 (ATAP…YFIF), and 260-280 (FPDK…LFII). EamA domains are found at residues 22 to 141 (SSIN…VVML) and 160 to 280 (ISFA…LFII).

It belongs to the drug/metabolite transporter (DMT) superfamily. 10 TMS drug/metabolite exporter (DME) (TC 2.A.7.3) family.

It is found in the cell inner membrane. Its activity is regulated as follows. Transport is inhibited by S-adenosylethionine and to a lesser extent by S-adenosylhomocysteine. Unlike eukaryotic transporters is not inhibited by sinfungin. Also inhibited by 2.4-dinitrophenol, suggesting transport is an energy-dependent process. Its function is as follows. Transports S-adenosylmethionine. This chain is S-adenosylmethionine uptake transporter (sam), found in Rickettsia prowazekii (strain Madrid E).